The following is a 468-amino-acid chain: Ribulose bisphosphate carboxylase large chain (468 aa).

The residue at position 5 (Lys5) is an N6,N6,N6-trimethyllysine. Substrate-binding residues include Asn114 and Thr164. The active-site Proton acceptor is Lys166. Lys168 serves as a coordination point for substrate. 3 residues coordinate Mg(2+): Lys192, Asp194, and Glu195. An N6-carboxylysine modification is found at Lys192. His285 functions as the Proton acceptor in the catalytic mechanism. Substrate is bound by residues Arg286, His318, and Ser370.

Belongs to the RuBisCO large chain family. Type I subfamily. Heterohexadecamer of 8 large chains and 8 small chains; disulfide-linked. The disulfide link is formed within the large subunit homodimers. It depends on Mg(2+) as a cofactor. The disulfide bond which can form in the large chain dimeric partners within the hexadecamer appears to be associated with oxidative stress and protein turnover.

Its subcellular location is the plastid. The protein resides in the chloroplast. It catalyses the reaction 2 (2R)-3-phosphoglycerate + 2 H(+) = D-ribulose 1,5-bisphosphate + CO2 + H2O. It carries out the reaction D-ribulose 1,5-bisphosphate + O2 = 2-phosphoglycolate + (2R)-3-phosphoglycerate + 2 H(+). In terms of biological role, ruBisCO catalyzes two reactions: the carboxylation of D-ribulose 1,5-bisphosphate, the primary event in carbon dioxide fixation, as well as the oxidative fragmentation of the pentose substrate in the photorespiration process. Both reactions occur simultaneously and in competition at the same active site. The polypeptide is Ribulose bisphosphate carboxylase large chain (Tecoma stans (Yellow bells)).